We begin with the raw amino-acid sequence, 480 residues long: Acetyl-coenzyme A carboxylase carboxyl transferase subunit beta, chloroplastic (480 aa).

Residues 212–480 (LWVQCENCYG…FPLNQINKYK (269 aa)) enclose the CoA carboxyltransferase N-terminal domain. The Zn(2+) site is built by cysteine 216, cysteine 219, cysteine 235, and cysteine 238. A C4-type zinc finger spans residues 216–238 (CENCYGLNYQKFFRSKMNICERC).

This sequence belongs to the AccD/PCCB family. Acetyl-CoA carboxylase is a heterohexamer composed of biotin carboxyl carrier protein, biotin carboxylase and 2 subunits each of ACCase subunit alpha and ACCase plastid-coded subunit beta (accD). Zn(2+) is required as a cofactor.

The protein resides in the plastid. It localises to the chloroplast stroma. It catalyses the reaction N(6)-carboxybiotinyl-L-lysyl-[protein] + acetyl-CoA = N(6)-biotinyl-L-lysyl-[protein] + malonyl-CoA. Its pathway is lipid metabolism; malonyl-CoA biosynthesis; malonyl-CoA from acetyl-CoA: step 1/1. Its function is as follows. Component of the acetyl coenzyme A carboxylase (ACC) complex. Biotin carboxylase (BC) catalyzes the carboxylation of biotin on its carrier protein (BCCP) and then the CO(2) group is transferred by the transcarboxylase to acetyl-CoA to form malonyl-CoA. The protein is Acetyl-coenzyme A carboxylase carboxyl transferase subunit beta, chloroplastic of Illicium oligandrum (Star anise).